A 223-amino-acid polypeptide reads, in one-letter code: MIF4G domain-containing protein B (223 aa).

An MIF4G domain is found at 9–206 (DYKIQGFDAD…LEMIEYRAAG (198 aa)).

Belongs to the MIF4GD family. As to quaternary structure, interacts with eif4g1, eif4g2 and slbp; probably tethered by SLBP to the 3'-end of mRNAs ending with the histone stem-loop, it also interacts with eif4g1 which is bound to their 5'-end.

It localises to the cytoplasm. It is found in the nucleus. Its function is as follows. Functions in replication-dependent translation of histone mRNAs which differ from other eukaryotic mRNAs in that they do not end with a poly-A tail but a stem-loop. May participate in circularizing those mRNAs specifically enhancing their translation. This Xenopus laevis (African clawed frog) protein is MIF4G domain-containing protein B (mif4gd-b).